We begin with the raw amino-acid sequence, 782 residues long: MKISSGAINFSTIPNQVKKLITSIREHTKNGLTSKITSVKNTHTSLNEKFKTGKDSPIEFALPQKIKDFFQPKDKNTLNKTLITVKNIKDTNNAGKKNISAEDVSKMNAAFMRKHIANQTCDYNYRMTGAAPLPGGVSVSANNRPTVSEGRTPPVSPSLSLQATSSPSSPADWAKKLTDAVLRQKAGEALTAADRDFSNADFRNITFSKILPPSFMERDGDIIKGFNFSNSKFTYSDISHLHFDECRFTYSTLSDVVCSNTKFSNSDMNEVFLQYSITTQQQPSFIDTTLKNTLIRHKANLSGVILNEPDNSSPPSVSGGGNFIRLGDIWLQMPLLWTENAVDGFLNHEHNNGKSILMTIDSLPDKYSQEKVQAMEDLVKSLRGGRLTEACIRPVESSLVSVLAHPPYTQSALISEWLGPVQERFFAHQCQTYNDVPLPAPDTYYQQRILPVLLDSFDRNSAAMTTHSGLFNQVILHCMTGVDCTDGTRQKAAALYEQYLAHPAVSPHIHNGLFGNYDGSPDWTTRAADNFLLLSSQDSDTAMMLSTDTLLTMLNPTPDTAWDNFYLLRAGENVSTAQISPVELFRHDFPVFLAAFNQQATQRRFGELIDIILSTEEHGELNQQFLAATNQKHSTVKLIDDASVSRLATIFDPLLPEGKLSPAHYQHILSAYHLTDATPQKQAETLFCLSTAFARYSSSAIFGTEHDSPPALRGYAEALMQKAWELSPAIFPSSEQFTEWSDRFHGLHGAFTCTSVVADSMQRHARKYFPSVLSSILPLAWA.

The interval 136–171 is disordered; it reads GVSVSANNRPTVSEGRTPPVSPSLSLQATSSPSSPA. Over residues 157–171 the composition is skewed to low complexity; that stretch reads PSLSLQATSSPSSPA. Residue Cys-753 is the Glycyl thioester intermediate of the active site.

It belongs to the SopA E3 ligase family. In terms of processing, ubiquitinated in the presence of host E1 ubiquitin-activating enzyme, E2 ubiquitin-conjugating enzyme and ubiquitin.

Its subcellular location is the secreted. The protein localises to the host cell. It catalyses the reaction S-ubiquitinyl-[E2 ubiquitin-conjugating enzyme]-L-cysteine + [acceptor protein]-L-lysine = [E2 ubiquitin-conjugating enzyme]-L-cysteine + N(6)-ubiquitinyl-[acceptor protein]-L-lysine.. In terms of biological role, effector proteins function to alter host cell physiology and promote bacterial survival in host tissues. This protein is an E3 ubiquitin ligase that interferes with host's ubiquitination pathway. For instance, prevents host innate immune response by ubiquitinating and thus sending to degradation host E3 ubiquitin ligases TRIM56 and TRIM65. In Salmonella typhimurium (strain D23580), this protein is E3 ubiquitin-protein ligase SopA (sopA).